A 304-amino-acid polypeptide reads, in one-letter code: Signal recognition particle receptor FtsY (304 aa).

GTP is bound by residues 109–116 (GVNGVGKT), 191–195 (DTAGR), and 255–258 (TKLD).

This sequence belongs to the GTP-binding SRP family. FtsY subfamily. In terms of assembly, part of the signal recognition particle protein translocation system, which is composed of SRP and FtsY. In terms of processing, sensitive to endogenous proteolytic cleavage between residues 18 and 19 and between residues 86 and 87.

It localises to the cell membrane. Its subcellular location is the cytoplasm. It carries out the reaction GTP + H2O = GDP + phosphate + H(+). Its function is as follows. Involved in targeting and insertion of nascent membrane proteins into the cytoplasmic membrane. Acts as a receptor for the complex formed by the signal recognition particle (SRP) and the ribosome-nascent chain (RNC). This is Signal recognition particle receptor FtsY from Thermus aquaticus.